A 143-amino-acid chain; its full sequence is Large ribosomal subunit protein uL11 (143 aa).

The protein belongs to the universal ribosomal protein uL11 family. In terms of assembly, part of the ribosomal stalk of the 50S ribosomal subunit. Interacts with L10 and the large rRNA to form the base of the stalk. L10 forms an elongated spine to which L12 dimers bind in a sequential fashion forming a multimeric L10(L12)X complex. Post-translationally, one or more lysine residues are methylated.

Forms part of the ribosomal stalk which helps the ribosome interact with GTP-bound translation factors. The protein is Large ribosomal subunit protein uL11 of Kineococcus radiotolerans (strain ATCC BAA-149 / DSM 14245 / SRS30216).